Here is a 265-residue protein sequence, read N- to C-terminus: Indole-3-glycerol phosphate synthase (265 aa).

This sequence belongs to the TrpC family.

The catalysed reaction is 1-(2-carboxyphenylamino)-1-deoxy-D-ribulose 5-phosphate + H(+) = (1S,2R)-1-C-(indol-3-yl)glycerol 3-phosphate + CO2 + H2O. It participates in amino-acid biosynthesis; L-tryptophan biosynthesis; L-tryptophan from chorismate: step 4/5. The polypeptide is Indole-3-glycerol phosphate synthase (Xanthomonas campestris pv. campestris (strain 8004)).